The primary structure comprises 257 residues: Imidazole glycerol phosphate synthase subunit HisF (257 aa).

Catalysis depends on residues Asp11 and Asp130.

The protein belongs to the HisA/HisF family. As to quaternary structure, heterodimer of HisH and HisF.

The protein localises to the cytoplasm. It catalyses the reaction 5-[(5-phospho-1-deoxy-D-ribulos-1-ylimino)methylamino]-1-(5-phospho-beta-D-ribosyl)imidazole-4-carboxamide + L-glutamine = D-erythro-1-(imidazol-4-yl)glycerol 3-phosphate + 5-amino-1-(5-phospho-beta-D-ribosyl)imidazole-4-carboxamide + L-glutamate + H(+). The protein operates within amino-acid biosynthesis; L-histidine biosynthesis; L-histidine from 5-phospho-alpha-D-ribose 1-diphosphate: step 5/9. IGPS catalyzes the conversion of PRFAR and glutamine to IGP, AICAR and glutamate. The HisF subunit catalyzes the cyclization activity that produces IGP and AICAR from PRFAR using the ammonia provided by the HisH subunit. This Shewanella sp. (strain W3-18-1) protein is Imidazole glycerol phosphate synthase subunit HisF.